A 173-amino-acid polypeptide reads, in one-letter code: Mesencephalic astrocyte-derived neurotrophic factor homolog (173 aa).

Residues 1–22 (MKTWHMVVVIGFLATLAQTSLA) form the signal peptide. Cystine bridges form between Cys28–Cys114, Cys31–Cys103, Cys61–Cys72, and Cys148–Cys151.

It belongs to the ARMET family.

The protein localises to the secreted. Its function is as follows. Required during the maturation of the embryonic nervous system for maintenance of neuronal and cuticular connectivity. Essential for maintenance of dopaminergic neurons and dopamine levels. The protein is Mesencephalic astrocyte-derived neurotrophic factor homolog of Drosophila sechellia (Fruit fly).